Here is a 117-residue protein sequence, read N- to C-terminus: Pre-mRNA-splicing factor ini1 (117 aa).

This sequence belongs to the PHF5 family.

It is found in the nucleus. Its function is as follows. Required for pre-mRNA splicing. The chain is Pre-mRNA-splicing factor ini1 (ini1) from Schizosaccharomyces pombe (strain 972 / ATCC 24843) (Fission yeast).